The following is a 342-amino-acid chain: Large ribosomal subunit protein uL10 (342 aa).

The segment at 212-342 is required for interaction with ribosomal protein L12 dimers; sequence EYIDMLQKAY…ALAGLSALFG (131 aa). Positions 299-308 are enriched in polar residues; the sequence is QAQVAVATQP. Positions 299–342 are disordered; the sequence is QAQVAVATQPSEEEKKEEEKTEEEEKEEEASEEEALAGLSALFG. Acidic residues predominate over residues 318–333; the sequence is KTEEEEKEEEASEEEA.

This sequence belongs to the universal ribosomal protein uL10 family. As to quaternary structure, part of the 50S ribosomal subunit, binds large rRNA. Forms the ribosomal stalk which helps the ribosome interact with GTP-bound translation factors. Forms a heptameric L10(L12)2(L12)2(L12)2 complex, where L10 forms an elongated spine to which the L12 dimers bind in a sequential fashion.

Forms the large subunit's ribosomal stalk, playing a central role in the interaction of the ribosome with elongation factors; the stalk complex of P.horikoshii binds to E.coli large subunits and confers on them the ability to interact with eukaryotic elongation factors. Each succesive L12 dimer bound along the P0 spine increases the GTPase activity of elongation factors and increases translation by reconsituted ribosomes, although the first site is the most stimulatory. The chain is Large ribosomal subunit protein uL10 from Pyrococcus horikoshii (strain ATCC 700860 / DSM 12428 / JCM 9974 / NBRC 100139 / OT-3).